Reading from the N-terminus, the 234-residue chain is Proteasome subunit alpha type-2 (234 aa).

Ala2 bears the N-acetylalanine mark. Phosphotyrosine is present on Tyr6. Residues Ser7, Ser14, and Ser16 each carry the phosphoserine modification. Position 24 is a phosphotyrosine (Tyr24). At Lys70 the chain carries N6-acetyllysine. Residues Tyr76 and Tyr121 each carry the phosphotyrosine modification. Lys171 carries the N6-acetyllysine modification.

Belongs to the peptidase T1A family. The 26S proteasome consists of a 20S proteasome core and two 19S regulatory subunits. The 20S proteasome core is a barrel-shaped complex made of 28 subunits that are arranged in four stacked rings. The two outer rings are each formed by seven alpha subunits, and the two inner rings are formed by seven beta subunits. The proteolytic activity is exerted by three beta-subunits PSMB5, PSMB6 and PSMB7. Phosphorylated on tyrosine residues; which may be important for nuclear import. Detected in liver (at protein level).

The protein localises to the cytoplasm. The protein resides in the nucleus. In terms of biological role, component of the 20S core proteasome complex involved in the proteolytic degradation of most intracellular proteins. This complex plays numerous essential roles within the cell by associating with different regulatory particles. Associated with two 19S regulatory particles, forms the 26S proteasome and thus participates in the ATP-dependent degradation of ubiquitinated proteins. The 26S proteasome plays a key role in the maintenance of protein homeostasis by removing misfolded or damaged proteins that could impair cellular functions, and by removing proteins whose functions are no longer required. Associated with the PA200 or PA28, the 20S proteasome mediates ubiquitin-independent protein degradation. This type of proteolysis is required in several pathways including spermatogenesis (20S-PA200 complex) or generation of a subset of MHC class I-presented antigenic peptides (20S-PA28 complex). The sequence is that of Proteasome subunit alpha type-2 (Psma2) from Mus musculus (Mouse).